We begin with the raw amino-acid sequence, 1902 residues long: Putative surface cell antigen sca1 (1902 aa).

The N-terminal stretch at Met1–Ala28 is a signal peptide. 5 disordered regions span residues Gly140–Pro273, Gln420–Ala485, Thr707–Ser729, Asn858–Asn885, and Lys1470–Asp1548. 2 stretches are compositionally biased toward polar residues: residues Gln146–Met159 and Thr168–His197. The segment covering Thr199–Pro212 has biased composition (low complexity). Positions Leu225–Lys238 are enriched in polar residues. The segment covering Ser246–Glu264 has biased composition (low complexity). Positions Phe423–Gly439 are enriched in polar residues. Basic and acidic residues predominate over residues Lys445–Ser482. Residues Arg863–Asp874 show a composition bias toward basic and acidic residues. Over residues Leu1491–Leu1507 the composition is skewed to low complexity. Acidic residues predominate over residues Ser1521–Thr1538. The Autotransporter domain occupies Glu1618–Leu1902.

The protein localises to the cell outer membrane. In Rickettsia conorii (strain ATCC VR-613 / Malish 7), this protein is Putative surface cell antigen sca1 (sca1).